A 340-amino-acid chain; its full sequence is Probable sugar phosphate/phosphate translocator At3g14410 (340 aa).

A run of 10 helical transmembrane segments spans residues 12-32 (EFVT…QIFF), 44-64 (FPYP…LCFL), 80-100 (LEIY…TLWL), 110-130 (VAFA…LGVA), 141-161 (LLIM…ELNI), 163-183 (WIGV…LIFM), 197-217 (ISLM…PWIF), 234-254 (VVLT…FLVI), 260-282 (LTIR…LLFA), and 286-305 (LTII…AAYN). A disordered region spans residues 320–340 (ETPGDAESIPLVSQGNTNTER). The span at 330 to 340 (LVSQGNTNTER) shows a compositional bias: polar residues.

Belongs to the TPT transporter family. TPT (TC 2.A.7.9) subfamily.

Its subcellular location is the membrane. The sequence is that of Probable sugar phosphate/phosphate translocator At3g14410 from Arabidopsis thaliana (Mouse-ear cress).